Consider the following 1473-residue polypeptide: MDITQKNKRDGTEVTERIITETVTTRLTSLPPKGGTSNGYAKTGSLGGGSRLEKQSLTHGSSGYINSSGSLRGNASTSSYRRAHSPASTLPNSPGSTFERKTHVTRHGTYEGSSSGNSSPEYPRKEFASSSTRGRSQTRESEIRVRLQSASPSTRWTELDDVKRLLKGSRSASVSPTRNSSNTLPIPKKGTVETKVVTASSQSVSGTYDTTILDANLPSHVWSSTLPAGSSMGTYHNNITTQSSSLLNTNAYSAGSVFGVPNNMASCSATLQPGISTSSSVFGMQNNLAPSSSTLSHGMAATSTAYGVKKNMPQSPTAVSTGVSTSAASTTNVQNDDLLHKDCKFLILEKDNTPAKKEMELLIMTKDSGKVFTASPASVAATSFSEDTLKKEKQAAYTDTYLVSEANGDVKTVTAKGNGASADIHGYDHRRGGGGGGGSGGALGSGAAGGGGKGSWGAAPTWCPCGSWCSWWKWLLGLLLTWLLLLGLLFGLIALAEEVRKLKARVEELEKMRGRLSYNEKMERSSQDSVQGVAPRLGEGLGKSELDDYNLEDVWQFMKVRLMTEQENGNLRGSPGPKGDMGVQGPKGDRGFPGTPGIPGPLGHQGPEGPKGQKGNVGEPGMEGPMGQRGREGPMGPRGEPGPPGFGEKGDRGDAGKPGIPGPPGVPGSVGPKGSIGPQGLRGEVGLPGIKGDKGPMGPPGPKGDQGEKGPRGLTGEPGLKGLPGAVGEPGAKGAMGPAGPDGHQGPRGEQGLPGMPGTRGLPGPSGDPGKPGLTGPQGPQGIPGTPGRPGVKGEPGAPGKIMTSEGSSTITVPGPPGPPGAMGPPGPPGAPGPVGPAGLPGQQGPRGEPGLAGESFMGSSSSFSEVLSTQGIDLRGPPGPPGPPGPPGEGLPGPPGPPGSLLTSSETFFSGPPGPPGPPGPKGDQGPPGPRGHQGERGFPGLSGSGSSSLGLNLQGPPGPPGPQGPKGDKGDPGVPGAPGIPGGPSRGGSSSSTTFMQGPPGPPGPPGPPGSLSSSGLEIQQYISDYMQSDSIRPYLSGVQGPPGPPGPPGPVTTITGETFNYSELASLVVSYLQTSGYNIGTSSTSISSEDILAALRRDDVRQYLQQYLMPQGAGGDWFLQSLDYAELSNRILSYMSSTGVSIGLPGPPGPPGLPGTSYEELLSLLQGSEFRGIVGPPGPPGPPGLPGSSWSSISTEDLSSYLQTAGLSSIPGPPGPPGPPGPRGPPGISGALATYAAENSDSFRSELISYLTSPDVRSFIVGPPGPPGPQGPPGDTRLVSTDSSYSRSGSSSSFSRDTSYSSSMGIGGASGGSLGEAGAFGMDMGRGYGAAAESGMYGGNGRFGTSFAGGLDYNELAVRVSESLQRQGLLQGMAYTVQGPPGRPGPQGPPGISKIFSAYSNVTEDLMDFFRTYGAIPGPPGQKGEMGIPGPKGERGPAGPPGPRGHKGEKGDKGDQFYIGRRRRSIAVKP.

The span at 1–19 (MDITQKNKRDGTEVTERII) shows a compositional bias: basic and acidic residues. 2 disordered regions span residues 1 to 155 (MDIT…PSTR) and 168 to 188 (GSRS…PIPK). Topologically, residues 1–474 (MDITQKNKRD…CGSWCSWWKW (474 aa)) are cytoplasmic. The segment at 1-572 (MDITQKNKRD…MTEQENGNLR (572 aa)) is nonhelical region (NC16). 3 stretches are compositionally biased toward polar residues: residues 57–96 (LTHG…SPGS), 111–120 (EGSSSGNSSP), and 170–184 (RSAS…SNTL). Residues 146–231 (RLQSASPSTR…WSSTLPAGSS (86 aa)) form a necessary for interaction with DST and for the recruitment of DST to hemidesmosome region. A helical; Signal-anchor for type II membrane protein transmembrane segment spans residues 475 to 495 (LLGLLLTWLLLLGLLFGLIAL). The Extracellular portion of the chain corresponds to 496–1473 (AEEVRKLKAR…RRRRSIAVKP (978 aa)). Disordered stretches follow at residues 567–1017 (ENGN…LSSS), 1173–1234 (FRGI…ISGA), and 1261–1308 (SFIV…SSMG). The segment at 573 to 1459 (GSPGPKGDMG…KGEKGDKGDQ (887 aa)) is triple-helical region. Low complexity-rich tracts occupy residues 619–638 (EPGM…MGPR), 667–678 (PGSVGPKGSIGP), 729–742 (EPGA…AGPD), and 769–790 (PGKP…PGRP). Over residues 814 to 835 (PGPPGPPGAMGPPGPPGAPGPV) the composition is skewed to pro residues. Composition is skewed to low complexity over residues 837–847 (PAGLPGQQGPR) and 854–866 (GESF…SFSE). Pro residues-rich tracts occupy residues 878–899 (PPGP…PGPP) and 913–922 (PPGPPGPPGP). Residues 940–957 (FPGLSGSGSSSLGLNLQG) are compositionally biased toward low complexity. Composition is skewed to pro residues over residues 1001-1011 (PPGPPGPPGPP) and 1179-1188 (PPGPPGPPGL). Over residues 1198 to 1210 (TEDLSSYLQTAGL) the composition is skewed to polar residues. Composition is skewed to pro residues over residues 1214–1228 (PGPP…PRGP) and 1266–1275 (PPGPPGPQGP). Residues 1283–1307 (STDSSYSRSGSSSSFSRDTSYSSSM) show a composition bias toward low complexity. The N-linked (GlcNAc...) asparagine glycan is linked to N1404. The tract at residues 1417–1473 (GAIPGPPGQKGEMGIPGPKGERGPAGPPGPRGHKGEKGDKGDQFYIGRRRRSIAVKP) is disordered. Basic and acidic residues predominate over residues 1449-1458 (HKGEKGDKGD). The interval 1460 to 1473 (FYIGRRRRSIAVKP) is nonhelical region (NC1). Positions 1463 to 1473 (GRRRRSIAVKP) are enriched in basic residues.

In terms of assembly, homotrimers of alpha 1(XVII)chains. Interacts (via cytoplasmic region) with ITGB4 (via cytoplasmic region). Interacts (via cytoplasmic region) with DST (via N-terminus). Interacts (via N-terminus) with PLEC. Interacts (via cytoplasmic region) with DSP. The intracellular/endo domain is disulfide-linked. Post-translationally, prolines at the third position of the tripeptide repeating unit (G-X-Y) are hydroxylated in some or all of the chains. In terms of processing, the ectodomain is shedded from the surface of keratinocytes resulting in a 120-kDa soluble form, also named as 120 kDa linear IgA disease antigen homolog. The shedding is mediated by membrane-bound metalloproteases.

The protein localises to the cell junction. It is found in the hemidesmosome. Its subcellular location is the membrane. It localises to the secreted. The protein resides in the extracellular space. The protein localises to the extracellular matrix. It is found in the basement membrane. Functionally, may play a role in the integrity of hemidesmosome and the attachment of basal keratinocytes to the underlying basement membrane. In terms of biological role, the 120 kDa linear IgA disease antigen homolog is an anchoring filament component involved in dermal-epidermal cohesion. The sequence is that of Collagen alpha-1(XVII) chain (COL17A1) from Bos taurus (Bovine).